Here is a 559-residue protein sequence, read N- to C-terminus: Glucans biosynthesis protein G (559 aa).

Positions 1–37 (MVSLLSCGTSASSHIVKKALTRLSLAMAAGLCFNLAA) are cleaved as a signal peptide.

This sequence belongs to the OpgD/OpgG family.

The protein resides in the periplasm. The protein operates within glycan metabolism; osmoregulated periplasmic glucan (OPG) biosynthesis. Involved in the biosynthesis of osmoregulated periplasmic glucans (OPGs). The protein is Glucans biosynthesis protein G of Shewanella frigidimarina (strain NCIMB 400).